A 608-amino-acid polypeptide reads, in one-letter code: Nuclear protein localization protein 4 homolog (608 aa).

At Ala-2 the chain carries N-acetylalanine. Lys-179 is modified (N6-acetyllysine). The MPN domain maps to 226–363; that stretch reads IMFENHTVAD…ICRLSPDGHF (138 aa). The RanBP2-type zinc finger occupies 580–608; it reads TSAMWACQHCTFMNQPGTGHCEMCSLPRT.

It belongs to the NPL4 family. Heterodimer with UFD1. The heterodimer binds ubiquitinated proteins. The heterodimer binds to VCP and inhibits Golgi membrane fusion. Interacts with ZFAND2B; probably through VCP.

Its subcellular location is the cytoplasm. It localises to the cytosol. The protein localises to the endoplasmic reticulum. The protein resides in the nucleus. The protein operates within protein degradation; proteasomal ubiquitin-dependent pathway. Functionally, the ternary complex containing UFD1, VCP and NPLOC4 binds ubiquitinated proteins and is necessary for the export of misfolded proteins from the ER to the cytoplasm, where they are degraded by the proteasome. The NPLOC4-UFD1-VCP complex regulates spindle disassembly at the end of mitosis and is necessary for the formation of a closed nuclear envelope. Acts as a negative regulator of type I interferon production via the complex formed with VCP and UFD1, which binds to RIGI and recruits RNF125 to promote ubiquitination and degradation of RIGI. This Rattus norvegicus (Rat) protein is Nuclear protein localization protein 4 homolog (Nploc4).